The following is a 293-amino-acid chain: sn-glycerol-3-phosphate transport system permease protein UgpA (293 aa).

Transmembrane regions (helical) follow at residues 10–30 (ILPYFLLAPQIVLTVVFFFWP), 72–92 (VTVVFNVLTALLAMGVALLLA), 108–128 (LLIWPYAVAPAVAGMLWLFIF), 155–177 (AMGLVVVAAAWKQISYNFLFFVA), 204–224 (IVFPLLAPTSFFLLVVNTVYA), and 261–281 (LGSSSAQSVILMAIVIALTAF). An ABC transmembrane type-1 domain is found at 66 to 282 (YLHSVQVTVV…AIVIALTAFQ (217 aa)).

The protein belongs to the binding-protein-dependent transport system permease family. As to quaternary structure, the complex is composed of two ATP-binding proteins (UgpC), two transmembrane proteins (UgpA and UgpE) and a solute-binding protein (UgpB).

It is found in the cell inner membrane. Part of the ABC transporter complex UgpBAEC involved in sn-glycerol-3-phosphate (G3P) import. Probably responsible for the translocation of the substrate across the membrane. In Brucella abortus biovar 1 (strain 9-941), this protein is sn-glycerol-3-phosphate transport system permease protein UgpA (ugpA).